A 109-amino-acid polypeptide reads, in one-letter code: U16-hexatoxin-Hi1a (109 aa).

Positions 1–16 (LTGHLCCMMIWWQATQ) are cleaved as a signal peptide. The propeptide occupies 17–43 (VISPPLPVIREENNSHKMGVSLFPLKR).

Post-translationally, contains 2 disulfide bonds. In terms of tissue distribution, expressed by the venom gland.

It is found in the secreted. In terms of biological role, probable ion channel inhibitor. The chain is U16-hexatoxin-Hi1a from Hadronyche infensa (Fraser island funnel-web spider).